Consider the following 510-residue polypeptide: uncharacterized protein (510 aa).

Disordered regions lie at residues 1-154 (MGSP…ATFL), 208-227 (DGNHGNQAKNSGPAETGDLA), 234-276 (TRES…QGIL), and 368-480 (NFYT…GCPR). At Ser43 the chain carries Phosphoserine. The segment covering 50-60 (PLVSQQDTSEA) has biased composition (polar residues). Basic and acidic residues predominate over residues 78–92 (EEERLGSPEDEKMDG). Ser84 is modified (phosphoserine). Composition is skewed to polar residues over residues 97–109 (SQPSVETEQQVAN) and 118–135 (QPSSESFCAETETGSNRR). The residue at position 120 (Ser120) is a Phosphoserine. A compositionally biased stretch (low complexity) spans 139–151 (ASGSEEAKAASAA). Residues 243-255 (SSLLTTTRGLTSG) show a composition bias toward low complexity. Residues 379 to 395 (RTKELQLVAKEDTDSTR) show a composition bias toward basic and acidic residues. Positions 414 to 441 (SVHQEFSSGDINTRSLQDPGNSQSSGLS) are enriched in polar residues.

This is an uncharacterized protein from Rattus norvegicus (Rat).